Consider the following 470-residue polypeptide: 3-isopropylmalate dehydratase large subunit (470 aa).

[4Fe-4S] cluster-binding residues include cysteine 351, cysteine 411, and cysteine 414.

This sequence belongs to the aconitase/IPM isomerase family. LeuC type 1 subfamily. In terms of assembly, heterodimer of LeuC and LeuD. The cofactor is [4Fe-4S] cluster.

It carries out the reaction (2R,3S)-3-isopropylmalate = (2S)-2-isopropylmalate. It functions in the pathway amino-acid biosynthesis; L-leucine biosynthesis; L-leucine from 3-methyl-2-oxobutanoate: step 2/4. Functionally, catalyzes the isomerization between 2-isopropylmalate and 3-isopropylmalate, via the formation of 2-isopropylmaleate. This is 3-isopropylmalate dehydratase large subunit from Rhodopseudomonas palustris (strain HaA2).